Here is a 983-residue protein sequence, read N- to C-terminus: Alanine--tRNA ligase, mitochondrial (983 aa).

The transit peptide at 1–24 directs the protein to the mitochondrion; sequence MTSTTGLRNLTLSFKKQLTTSTRT. Serine 504 is modified (phosphoserine). Zn(2+)-binding residues include histidine 625, histidine 629, cysteine 744, and histidine 748. Serine 975 carries the phosphoserine modification.

Belongs to the class-II aminoacyl-tRNA synthetase family. In terms of assembly, monomer. It depends on Zn(2+) as a cofactor.

Its subcellular location is the cytoplasm. It is found in the mitochondrion. It carries out the reaction tRNA(Ala) + L-alanine + ATP = L-alanyl-tRNA(Ala) + AMP + diphosphate. Functionally, catalyzes the attachment of alanine to tRNA(Ala) in a two-step reaction: alanine is first activated by ATP to form Ala-AMP and then transferred to the acceptor end of tRNA(Ala). Also edits incorrectly charged tRNA(Ala) via its editing domain. The sequence is that of Alanine--tRNA ligase, mitochondrial from Saccharomyces cerevisiae (strain ATCC 204508 / S288c) (Baker's yeast).